We begin with the raw amino-acid sequence, 88 residues long: DNA-directed RNA polymerase subunit omega (88 aa).

Belongs to the RNA polymerase subunit omega family. In terms of assembly, the RNAP catalytic core consists of 2 alpha, 1 beta, 1 beta' and 1 omega subunit. When a sigma factor is associated with the core the holoenzyme is formed, which can initiate transcription.

The enzyme catalyses RNA(n) + a ribonucleoside 5'-triphosphate = RNA(n+1) + diphosphate. Functionally, promotes RNA polymerase assembly. Latches the N- and C-terminal regions of the beta' subunit thereby facilitating its interaction with the beta and alpha subunits. The polypeptide is DNA-directed RNA polymerase subunit omega (Salinispora arenicola (strain CNS-205)).